A 509-amino-acid chain; its full sequence is Subtelomeric hrmA-associated cluster protein AFUA_5G14880 (509 aa).

Functionally, part of the subtelomeric hrmA-associated cluster (HAC) containing genes that alter the hyphal surface (such as reduced total chitin or increased beta-glucan exposure) and perturb inter-hyphal interactions within the developing biofilms, resulting in a loss of vertically aligned polarized growing filaments. Consequently, this hypoxia-typic morphotype (called H-MORPH) with altered biofilm architecture leads to increased hypoxia fitness, increased host inflammation, rapid disease progression, and mortality in a murine model of invasive aspergillosis. In Aspergillus fumigatus (strain ATCC MYA-4609 / CBS 101355 / FGSC A1100 / Af293) (Neosartorya fumigata), this protein is Subtelomeric hrmA-associated cluster protein AFUA_5G14880.